The sequence spans 379 residues: ATP phosphoribosyltransferase regulatory subunit (379 aa).

It belongs to the class-II aminoacyl-tRNA synthetase family. HisZ subfamily. Heteromultimer composed of HisG and HisZ subunits.

The protein localises to the cytoplasm. The protein operates within amino-acid biosynthesis; L-histidine biosynthesis; L-histidine from 5-phospho-alpha-D-ribose 1-diphosphate: step 1/9. Functionally, required for the first step of histidine biosynthesis. May allow the feedback regulation of ATP phosphoribosyltransferase activity by histidine. The polypeptide is ATP phosphoribosyltransferase regulatory subunit (Paramagnetospirillum magneticum (strain ATCC 700264 / AMB-1) (Magnetospirillum magneticum)).